Consider the following 407-residue polypeptide: Endo-1,4-beta-xylanase (407 aa).

Positions 1 to 28 (MRNVVRKPLTIGLALTLLLPMGMTATSA) are cleaved as a signal peptide. In terms of domain architecture, GH10 spans 42–406 (ALNAPQLDQR…KPAYWAIIDH (365 aa)). Glu-187 serves as the catalytic Proton donor. Glu-293 serves as the catalytic Nucleophile.

The protein belongs to the glycosyl hydrolase 10 (cellulase F) family.

It localises to the secreted. It carries out the reaction Endohydrolysis of (1-&gt;4)-beta-D-xylosidic linkages in xylans.. The protein operates within glycan degradation; xylan degradation. The sequence is that of Endo-1,4-beta-xylanase from Geobacillus stearothermophilus (Bacillus stearothermophilus).